Here is a 197-residue protein sequence, read N- to C-terminus: Phosphoheptose isomerase (197 aa).

The region spanning 34–196 is the SIS domain; sequence MVQCLLGGNK…DRTLFPQDEQ (163 aa). 49 to 51 provides a ligand contact to substrate; the sequence is NGG. His58 and Glu62 together coordinate Zn(2+). Substrate contacts are provided by residues Glu62, 91–92, 117–119, Ser122, and Gln172; these read ND and STS. Positions 172 and 180 each coordinate Zn(2+).

The protein belongs to the SIS family. GmhA subfamily. As to quaternary structure, homotetramer. Requires Zn(2+) as cofactor.

The protein resides in the cytoplasm. The catalysed reaction is 2 D-sedoheptulose 7-phosphate = D-glycero-alpha-D-manno-heptose 7-phosphate + D-glycero-beta-D-manno-heptose 7-phosphate. The protein operates within carbohydrate biosynthesis; D-glycero-D-manno-heptose 7-phosphate biosynthesis; D-glycero-alpha-D-manno-heptose 7-phosphate and D-glycero-beta-D-manno-heptose 7-phosphate from sedoheptulose 7-phosphate: step 1/1. In terms of biological role, catalyzes the isomerization of sedoheptulose 7-phosphate in D-glycero-D-manno-heptose 7-phosphate. This chain is Phosphoheptose isomerase, found in Shewanella piezotolerans (strain WP3 / JCM 13877).